We begin with the raw amino-acid sequence, 553 residues long: Cytochrome P450 86A22 (553 aa).

Residues 8-24 (MIVAIVAAYLLWFKSIT) traverse the membrane as a helical segment. C459 is a binding site for heme.

This sequence belongs to the cytochrome P450 family. Heme is required as a cofactor. Mostly expressed in the developing stigma of floral buds. Weakly detected in leaves, stems and flowers.

The protein localises to the membrane. It catalyses the reaction (9Z)-octadecenoyl-CoA + reduced [NADPH--hemoprotein reductase] + O2 = (9Z)-18-hydroxyoctadecenoyl-CoA + oxidized [NADPH--hemoprotein reductase] + H2O + H(+). It carries out the reaction (9Z,12Z)-octadecadienoyl-CoA + reduced [NADPH--hemoprotein reductase] + O2 = (9Z,12Z)-18-hydroxyoctadecadienoyl-CoA + oxidized [NADPH--hemoprotein reductase] + H2O + H(+). In terms of biological role, fatty acyl-CoA omega-hydroxylase essential for the production of omega-hydroxy fatty acids and the biosynthesis of triacylglycerol-/diacylglycerol-based estolide polyesters in the stigma. Substrate preference is 16:0-CoA &gt; 18:1-CoA &gt; 18:0-CoA. This is Cytochrome P450 86A22 from Petunia hybrida (Petunia).